Consider the following 483-residue polypeptide: Probable 4-hydroxyphenylacetate 3-monooxygenase (483 aa).

Substrate-binding positions include 104–108 (RSPDY) and H150. Residues 150–152 (HTF), 156–159 (QVNR), and T193 each bind FAD. Substrate is bound at residue 206–207 (AP). 452–455 (DPIR) contributes to the FAD binding site.

Belongs to the FADH(2)-utilizing monooxygenase family.

It catalyses the reaction 4-hydroxyphenylacetate + FADH2 + O2 = 3,4-dihydroxyphenylacetate + FAD + H2O + H(+). The protein operates within aromatic compound metabolism; 4-hydroxyphenylacetate degradation; pyruvate and succinate semialdehyde from 4-hydroxyphenylacetate: step 1/7. In terms of biological role, catalyzes the hydroxylation of 4-hydroxyphenylacetic acid (4HPA), leading to the production of 3,4-dihydroxyphenylacetic acid (DHPA). The sequence is that of Probable 4-hydroxyphenylacetate 3-monooxygenase (yoaI) from Bacillus subtilis (strain 168).